The sequence spans 182 residues: MKEKEIQENMNKSIEATQRNFNTIRTGRANASLLDRVSVDYYGAETPIKSLATISTIDSQTISIQPFDISCLQAIEKSISMSDLGITPNNDGKVIRINVPPLTEERRKEFCKLASKYAEEGKVALRNIRRDAVDKEKKDEKDGLISIDESRDNQSEIQKITDKYIALIETKLSEKEKEILKV.

It belongs to the RRF family.

The protein resides in the cytoplasm. Responsible for the release of ribosomes from messenger RNA at the termination of protein biosynthesis. May increase the efficiency of translation by recycling ribosomes from one round of translation to another. The chain is Ribosome-recycling factor from Prochlorococcus marinus (strain MIT 9215).